A 317-amino-acid polypeptide reads, in one-letter code: Probable cell division protein WhiA (317 aa).

A DNA-binding region (H-T-H motif) is located at residues 276-310; the sequence is TLKELGEMVSGGKISKSGINHRLRKIDDIAEKLRA.

The protein belongs to the WhiA family.

Functionally, involved in cell division and chromosome segregation. This chain is Probable cell division protein WhiA, found in Bacillus thuringiensis (strain Al Hakam).